Reading from the N-terminus, the 367-residue chain is Uroporphyrinogen decarboxylase (367 aa).

Residues 28–32 (RQAGR), Asp-78, Tyr-158, Thr-213, and His-334 contribute to the substrate site.

Belongs to the uroporphyrinogen decarboxylase family. Homodimer.

The protein localises to the cytoplasm. The catalysed reaction is uroporphyrinogen III + 4 H(+) = coproporphyrinogen III + 4 CO2. It participates in porphyrin-containing compound metabolism; protoporphyrin-IX biosynthesis; coproporphyrinogen-III from 5-aminolevulinate: step 4/4. Catalyzes the decarboxylation of four acetate groups of uroporphyrinogen-III to yield coproporphyrinogen-III. This chain is Uroporphyrinogen decarboxylase, found in Ralstonia pickettii (strain 12J).